Reading from the N-terminus, the 154-residue chain is Myoglobin (154 aa).

Residues Gly2 to Lys148 form the Globin domain. His65 serves as a coordination point for nitrite. His65 contacts O2. Heme b is bound at residue His94.

It belongs to the globin family. As to quaternary structure, monomeric.

The protein resides in the cytoplasm. It is found in the sarcoplasm. It carries out the reaction Fe(III)-heme b-[protein] + nitric oxide + H2O = Fe(II)-heme b-[protein] + nitrite + 2 H(+). The enzyme catalyses H2O2 + AH2 = A + 2 H2O. Its function is as follows. Monomeric heme protein which primary function is to store oxygen and facilitate its diffusion within muscle tissues. Reversibly binds oxygen through a pentacoordinated heme iron and enables its timely and efficient release as needed during periods of heightened demand. Depending on the oxidative conditions of tissues and cells, and in addition to its ability to bind oxygen, it also has a nitrite reductase activity whereby it regulates the production of bioactive nitric oxide. Under stress conditions, like hypoxia and anoxia, it also protects cells against reactive oxygen species thanks to its pseudoperoxidase activity. In Varanus varius (Lace monitor lizard), this protein is Myoglobin (MB).